The following is a 437-amino-acid chain: Adenylosuccinate synthetase (437 aa).

GTP contacts are provided by residues 12–18 and 40–42; these read GDEGKGK and GHT. Catalysis depends on Asp-13, which acts as the Proton acceptor. The Mg(2+) site is built by Asp-13 and Gly-40. IMP contacts are provided by residues 13-16, 38-41, Thr-131, Arg-145, Gln-226, Thr-241, and Arg-305; these read DEGK and NAGH. Catalysis depends on His-41, which acts as the Proton donor. Residue 301–307 participates in substrate binding; it reads ATTGRRR. GTP is bound by residues Arg-307, 333-335, and 415-417; these read KLD and SVG.

This sequence belongs to the adenylosuccinate synthetase family. Homodimer. Mg(2+) is required as a cofactor.

The protein resides in the cytoplasm. The catalysed reaction is IMP + L-aspartate + GTP = N(6)-(1,2-dicarboxyethyl)-AMP + GDP + phosphate + 2 H(+). It functions in the pathway purine metabolism; AMP biosynthesis via de novo pathway; AMP from IMP: step 1/2. Plays an important role in the de novo pathway of purine nucleotide biosynthesis. Catalyzes the first committed step in the biosynthesis of AMP from IMP. This chain is Adenylosuccinate synthetase, found in Desulfotalea psychrophila (strain LSv54 / DSM 12343).